The following is a 3526-amino-acid chain: WD repeat and FYVE domain-containing protein 3 (3526 aa).

Residues Ser1942 and Ser2278 each carry the phosphoserine modification. Positions 2285-2981 (LTGSRRNRKE…PHPPKRVRSR (697 aa)) are sufficient for localization to p62 bodies/ALIS. Disordered regions lie at residues 2403–2429 (ETNVASEIPSKQPETPDDIPQKKPARY) and 2459–2522 (SSEG…EKTD). The segment covering 2468–2477 (EPEHGEDTIA) has biased composition (basic and acidic residues). A Phosphoserine modification is found at Ser2492. The region spanning 2531 to 2656 (EEGEKIQHMY…IRNKVYQRFL (126 aa)) is the BEACH-type PH domain. The tract at residues 2586–3526 (MHEPIIPRGA…RGSEDGPRNC (941 aa)) is interaction with SQSTM1. One can recognise a BEACH domain in the interval 2683 to 2976 (GLLSTLVGEK…QLFKKPHPPK (294 aa)). Positions 2981–3526 (RLNGDNAGIS…RGSEDGPRNC (546 aa)) are interaction with ATG5. WD repeat units lie at residues 3077-3115 (SEWGQILCAICPNPKLVITGGTSTVVCVWEMGTSKEKAK), 3125-3164 (GHTDTVTCATASLAYHIIVSGSRDRTCIIWDLNKLSFLTQ), 3167-3206 (GHRAPVSALCINELTGDIVSCAGTYIHVWSINGNPIVSVN), and 3210-3254 (GRSQ…VPET). Positions 3272 to 3335 (AQIGQEAQDE…SGSDDSRRWS (64 aa)) are disordered. Residues 3278–3290 (AQDEDSSDSEADE) show a composition bias toward acidic residues. The segment at 3313–3363 (AASCRATAAWCTDSGSDDSRRWSDQLSLDEKDGFIFVNYSEGQTRAHLQGP) is interaction with GABARAP. 2 positions are modified to phosphoserine: Ser3335 and Ser3339. The LC3-interacting region (LIR) signature appears at 3346–3349 (FIFV). The WD 5 repeat unit spans residues 3408–3447 (AHPAEVTALGISKDHSRILVGDSRGRVFSWSVSDQPGRSA). The segment at 3454 to 3514 (DEGGDSCSGC…VCQNCYYNLQ (61 aa)) adopts an FYVE-type zinc-finger fold. The Zn(2+) site is built by Cys3460, Cys3463, Cys3476, Cys3479, Cys3484, Cys3487, Cys3506, and Cys3509.

In terms of assembly, directly interacts with ATG5 and associates with the ATG12-ATG5-ATG16L complex. Interacts with p62/SQSTM1; this interaction is required to recruit WDFY3 to cytoplasmic bodies and to PML bodies. Directly interacts with GABARAP, GABARAPL1 and GABARAPL2; the interaction with GABARAP is required for WDFY3 recruitment to MAP1LC3B-positive p62/SQSTM1 bodies. Weakly interacts with MAP1LC3C; this interaction is direct. Does not interact with MAP1LC3A, nor MAP1LC3B. Interacts with TRAF6. Expressed in osteoclast and their mononuclear precursors (at protein level).

Its subcellular location is the nucleus membrane. The protein localises to the cytoplasm. It is found in the cytosol. It localises to the nucleus. The protein resides in the PML body. Its subcellular location is the membrane. The protein localises to the perikaryon. It is found in the cell projection. It localises to the axon. Its function is as follows. Required for selective macroautophagy (aggrephagy). Acts as an adapter protein by linking specific proteins destined for degradation to the core autophagic machinery members, such as the ATG5-ATG12-ATG16L E3-like ligase, SQSTM1 and LC3. Along with p62/SQSTM1, involved in the formation and autophagic degradation of cytoplasmic ubiquitin-containing inclusions (p62 bodies, ALIS/aggresome-like induced structures). Along with SQSTM1, required to recruit ubiquitinated proteins to PML bodies in the nucleus. Important for normal brain development. Essential for the formation of axonal tracts throughout the brain and spinal cord, including the formation of the major forebrain commissures. Involved in the ability of neural cells to respond to guidance cues. Required for cortical neurons to respond to the trophic effects of netrin-1/NTN1. Regulates Wnt signaling through the removal of DVL3 aggregates, likely in an autophagy-dependent manner. This process may be important for the determination of brain size during embryonic development. May regulate osteoclastogenesis by acting on the TNFSF11/RANKL - TRAF6 pathway. After cytokinetic abscission, involved in midbody remnant degradation. In vitro strongly binds to phosphatidylinositol 3-phosphate (PtdIns3P). In Homo sapiens (Human), this protein is WD repeat and FYVE domain-containing protein 3 (WDFY3).